A 352-amino-acid polypeptide reads, in one-letter code: Alanine racemase (352 aa).

Catalysis depends on Lys-33, which acts as the Proton acceptor; specific for D-alanine. Lys-33 is modified (N6-(pyridoxal phosphate)lysine). A substrate-binding site is contributed by Arg-129. The active-site Proton acceptor; specific for L-alanine is the Tyr-250. Met-298 is a substrate binding site.

This sequence belongs to the alanine racemase family. The cofactor is pyridoxal 5'-phosphate.

The catalysed reaction is L-alanine = D-alanine. It functions in the pathway amino-acid biosynthesis; D-alanine biosynthesis; D-alanine from L-alanine: step 1/1. Catalyzes the interconversion of L-alanine and D-alanine. May also act on other amino acids. The chain is Alanine racemase (alr) from Neisseria meningitidis serogroup A / serotype 4A (strain DSM 15465 / Z2491).